Consider the following 334-residue polypeptide: MKEIIEKLAKFENLSGVEMTDVIERIVTGRVTEAQIASLLLALKMKGETPEERTAIARVMRGHAQHIPTEIHDAMDNCGTGGDKSFSFNISTTAAFVLAGGGIHMAKHGNRSISSKSGSADVLEALGINLDLKPAELGKVFDKTGIVFLFAKNMHPAMKYIMPARLELGIPTIMNLTGPLIHPMALETQLLGISRPELLESTAQVLKNMGRKRAIVVAGPEGLDEAGLNGTTKIALLENGEISLSSFTPEDLGMEGYAMEDIRGGNAQENAEILLSVLKNEASPFLETTVLNAGLGFYANGKIDSIKEGVALARQVIARGKALEKLRLLQEYQK.

Residues G79, G82–D83, S87, N89–T92, K107–S115, and S119 each bind 5-phospho-alpha-D-ribose 1-diphosphate. Residue G79 coordinates anthranilate. Mg(2+) is bound at residue S91. Position 110 (N110) interacts with anthranilate. R165 is an anthranilate binding site. Mg(2+)-binding residues include D224 and E225.

Belongs to the anthranilate phosphoribosyltransferase family. Homodimer. Mg(2+) serves as cofactor.

The catalysed reaction is N-(5-phospho-beta-D-ribosyl)anthranilate + diphosphate = 5-phospho-alpha-D-ribose 1-diphosphate + anthranilate. It participates in amino-acid biosynthesis; L-tryptophan biosynthesis; L-tryptophan from chorismate: step 2/5. Functionally, catalyzes the transfer of the phosphoribosyl group of 5-phosphorylribose-1-pyrophosphate (PRPP) to anthranilate to yield N-(5'-phosphoribosyl)-anthranilate (PRA). The polypeptide is Anthranilate phosphoribosyltransferase (Streptococcus pneumoniae serotype 19F (strain G54)).